Reading from the N-terminus, the 529-residue chain is Glucose-6-phosphate isomerase (529 aa).

The active-site Proton donor is Glu322. Residues His351 and Lys455 contribute to the active site.

Belongs to the GPI family.

It localises to the cytoplasm. The catalysed reaction is alpha-D-glucose 6-phosphate = beta-D-fructose 6-phosphate. It functions in the pathway carbohydrate biosynthesis; gluconeogenesis. Its pathway is carbohydrate degradation; glycolysis; D-glyceraldehyde 3-phosphate and glycerone phosphate from D-glucose: step 2/4. Its function is as follows. Catalyzes the reversible isomerization of glucose-6-phosphate to fructose-6-phosphate. This Cyanothece sp. (strain PCC 7425 / ATCC 29141) protein is Glucose-6-phosphate isomerase.